Here is a 354-residue protein sequence, read N- to C-terminus: Lysophosphatidic acid receptor 3 (354 aa).

Over 1–31 the chain is Extracellular; sequence MNECHYDKRMDFFYNRSNTDTADEWTGTKLV. Asn-15 carries N-linked (GlcNAc...) asparagine glycosylation. The chain crosses the membrane as a helical span at residues 32-52; it reads IVLCVGTFFCLFIFFSNSLVI. Topologically, residues 53–67 are cytoplasmic; it reads AAVITNRKFHFPFYY. The helical transmembrane segment at 68–88 threads the bilayer; sequence LLANLAAADFFAGIAYVFLMF. At 89 to 101 the chain is on the extracellular side; that stretch reads NTGPVSKTLTVNR. A helical transmembrane segment spans residues 102-124; it reads WLLRQGLLDTSLTASLANLLVIA. Topologically, residues 125–146 are cytoplasmic; it reads VERHMSIMRMRIHSNLTKKRVT. A helical membrane pass occupies residues 147–167; that stretch reads LLILLVWAIAIFMGAVPTLGW. Over 168–186 the chain is Extracellular; that stretch reads NCLCNISACSSLAPIYSRS. Residue Asn-172 is glycosylated (N-linked (GlcNAc...) asparagine). The helical transmembrane segment at 187–207 threads the bilayer; the sequence is YLIFWTVSNLLAFFIMVVVYV. Topologically, residues 208 to 240 are cytoplasmic; the sequence is RIYMYVKRKTNVLSPHTSGSISRRRAPMKLMKT. Residues 241 to 261 traverse the membrane as a helical segment; it reads VMTVLGAFVVCWTPGLVVLLL. Residues 262-276 are Extracellular-facing; sequence DGLNCKQCNVQHVKR. The helical transmembrane segment at 277-295 threads the bilayer; the sequence is WFLLLALLNSVMNPIIYSY. The Cytoplasmic portion of the chain corresponds to 296-354; that stretch reads KDEDMYNTMRKMICCAPHDSNAERHPSRIPSTIHSRSDTGSQYLEDSISQGQVCNKSSS. Cys-309 carries S-palmitoyl cysteine lipidation.

It belongs to the G-protein coupled receptor 1 family.

It is found in the cell membrane. Its function is as follows. Receptor for lysophosphatidic acid (LPA), a mediator of diverse cellular activities. Seems to be coupled to the G(i)/G(o) and G(q) families of heteromeric G proteins. The chain is Lysophosphatidic acid receptor 3 (Lpar3) from Rattus norvegicus (Rat).